We begin with the raw amino-acid sequence, 342 residues long: Holliday junction branch migration complex subunit RuvB (342 aa).

Residues 1 to 181 (MENRMVTPFD…FGMLCAMEFY (181 aa)) are large ATPase domain (RuvB-L). ATP is bound by residues L20, R21, G62, K65, T66, T67, 128 to 130 (EDY), R171, Y181, and R218. Residue T66 participates in Mg(2+) binding. Residues 182-252 (TDEELMEIVV…GAKAALDLLE (71 aa)) are small ATPAse domain (RuvB-S). Residues 255-342 (KEGLDKIDNK…KDNQVSIFNK (88 aa)) are head domain (RuvB-H). Residues R310 and R315 each coordinate DNA.

The protein belongs to the RuvB family. Homohexamer. Forms an RuvA(8)-RuvB(12)-Holliday junction (HJ) complex. HJ DNA is sandwiched between 2 RuvA tetramers; dsDNA enters through RuvA and exits via RuvB. An RuvB hexamer assembles on each DNA strand where it exits the tetramer. Each RuvB hexamer is contacted by two RuvA subunits (via domain III) on 2 adjacent RuvB subunits; this complex drives branch migration. In the full resolvosome a probable DNA-RuvA(4)-RuvB(12)-RuvC(2) complex forms which resolves the HJ.

It localises to the cytoplasm. It carries out the reaction ATP + H2O = ADP + phosphate + H(+). In terms of biological role, the RuvA-RuvB-RuvC complex processes Holliday junction (HJ) DNA during genetic recombination and DNA repair, while the RuvA-RuvB complex plays an important role in the rescue of blocked DNA replication forks via replication fork reversal (RFR). RuvA specifically binds to HJ cruciform DNA, conferring on it an open structure. The RuvB hexamer acts as an ATP-dependent pump, pulling dsDNA into and through the RuvAB complex. RuvB forms 2 homohexamers on either side of HJ DNA bound by 1 or 2 RuvA tetramers; 4 subunits per hexamer contact DNA at a time. Coordinated motions by a converter formed by DNA-disengaged RuvB subunits stimulates ATP hydrolysis and nucleotide exchange. Immobilization of the converter enables RuvB to convert the ATP-contained energy into a lever motion, pulling 2 nucleotides of DNA out of the RuvA tetramer per ATP hydrolyzed, thus driving DNA branch migration. The RuvB motors rotate together with the DNA substrate, which together with the progressing nucleotide cycle form the mechanistic basis for DNA recombination by continuous HJ branch migration. Branch migration allows RuvC to scan DNA until it finds its consensus sequence, where it cleaves and resolves cruciform DNA. The polypeptide is Holliday junction branch migration complex subunit RuvB (Clostridium botulinum (strain Loch Maree / Type A3)).